The following is a 207-amino-acid chain: Large ribosomal subunit protein uL4 (207 aa).

The protein belongs to the universal ribosomal protein uL4 family. Part of the 50S ribosomal subunit.

Its function is as follows. One of the primary rRNA binding proteins, this protein initially binds near the 5'-end of the 23S rRNA. It is important during the early stages of 50S assembly. It makes multiple contacts with different domains of the 23S rRNA in the assembled 50S subunit and ribosome. Functionally, forms part of the polypeptide exit tunnel. The protein is Large ribosomal subunit protein uL4 of Rickettsia conorii (strain ATCC VR-613 / Malish 7).